Reading from the N-terminus, the 541-residue chain is Ankyrin repeat domain-containing protein 13C (541 aa).

Positions 1–20 (MTGEKIRSLRRDHKPSKEDG) are enriched in basic and acidic residues. A disordered region spans residues 1-53 (MTGEKIRSLRRDHKPSKEDGDVLEPCEEEATAALGGAFTGGRSGPGGSGKGGK). Residues 21 to 30 (DVLEPCEEEA) show a composition bias toward acidic residues. Gly residues predominate over residues 37 to 52 (AFTGGRSGPGGSGKGG). ANK repeat units lie at residues 111 to 142 (PSLY…QKDN), 143 to 172 (HGNT…PVKV), and 176 to 205 (QGWS…QQSR). The residue at position 411 (S411) is a Phosphoserine.

The protein resides in the endoplasmic reticulum membrane. Its function is as follows. Acts as a molecular chaperone for G protein-coupled receptors, regulating their biogenesis and exit from the ER. In Mus musculus (Mouse), this protein is Ankyrin repeat domain-containing protein 13C (Ankrd13c).